An 82-amino-acid chain; its full sequence is Small ribosomal subunit protein uS17 (82 aa).

It belongs to the universal ribosomal protein uS17 family. As to quaternary structure, part of the 30S ribosomal subunit.

In terms of biological role, one of the primary rRNA binding proteins, it binds specifically to the 5'-end of 16S ribosomal RNA. The protein is Small ribosomal subunit protein uS17 of Azorhizobium caulinodans (strain ATCC 43989 / DSM 5975 / JCM 20966 / LMG 6465 / NBRC 14845 / NCIMB 13405 / ORS 571).